Consider the following 170-residue polypeptide: MVSSIKDMLKYDEGEKLEMYKDTEGYYTIGIGHLITRIKERNAAILSLEEKIGHKVKMDSKNEPIITSSESEALFEKDLSVATKSIESNPTLSTIYKNLDNIRKMAIINMVFQMGVNNVLTFKMSLKLIEEKKWAEAAKEMKNSTWNHQTPNRSNRVISVIETGTLNAYK.

Residue Glu13 is the Proton donor of the active site. The active-site Nucleophile is the Asp22.

This sequence belongs to the glycosyl hydrolase 24 family.

The catalysed reaction is Hydrolysis of (1-&gt;4)-beta-linkages between N-acetylmuramic acid and N-acetyl-D-glucosamine residues in a peptidoglycan and between N-acetyl-D-glucosamine residues in chitodextrins.. This chain is Probable T4-type lysozyme 1, found in Dictyostelium discoideum (Social amoeba).